A 248-amino-acid polypeptide reads, in one-letter code: DNA polymerase sliding clamp (248 aa).

Belongs to the PCNA family. As to quaternary structure, homotrimer. The subunits circularize to form a toroid; DNA passes through its center. Replication factor C (RFC) is required to load the toroid on the DNA.

Functionally, sliding clamp subunit that acts as a moving platform for DNA processing. Responsible for tethering the catalytic subunit of DNA polymerase and other proteins to DNA during high-speed replication. The polypeptide is DNA polymerase sliding clamp (Cenarchaeum symbiosum (strain A)).